The sequence spans 658 residues: DNA-binding protein Rfx5 (658 aa).

Over residues 1–10 the composition is skewed to basic and acidic residues; that stretch reads MAEDKPDAKS. The interval 1 to 28 is disordered; that stretch reads MAEDKPDAKSPKTGARPQGGADAGEPTT. Alanine 2 is modified (N-acetylalanine). At serine 10 the chain carries Phosphoserine. Positions 24 to 89 are N-terminal domain; that stretch reads GEPTTLLQRL…PSLLSNEEYM (66 aa). The leucine-rich region; critical for dimer formation and for interaction with RFXAP stretch occupies residues 61–65; that stretch reads LYLYL. The RFX-type winged-helix DNA-binding region spans 91–167; sequence AYRWIRNHLE…YCYSGIRRKT (77 aa). The PxLPxI/L motif; mediates interaction with RFXANK signature appears at 172-177; the sequence is PPLPGL. Serine 184 carries the post-translational modification Phosphoserine. Disordered stretches follow at residues 250-315, 382-422, 443-602, and 624-658; these read LAEE…SSVP, AGPG…GLGA, VPPR…DKIP, and KGEADAATQGNKGLKGRVLQSSLTPEHKDPKATPP. Residues 277–309 are compositionally biased toward basic and acidic residues; sequence GPKKPERPAQPPKEQEARAGTDLPGRAERKKSV. Composition is skewed to gly residues over residues 382-398 and 406-422; these read AGPGPGPGLGPRFGPGP and PGLGAGLGPGLGPGLGA. 2 stretches are compositionally biased toward basic and acidic residues: residues 465-476 and 489-498; these read PRPHDKGIKRTA and PVKEMKHETQ. A compositionally biased stretch (basic residues) spans 506 to 516; sequence KRKRGRPRKKP. The segment covering 648–658 has biased composition (basic and acidic residues); it reads PEHKDPKATPP.

This sequence belongs to the RFX family. As to quaternary structure, homodimer. The RFX heterotetrameric complex consists of 2 molecules of RFX5 and one each of RFXAP and RFX-B/RFXANK; with each subunit representing a separate complementation group. Interacts (via PxLPxI/L motif) with RFXANK (via ankyrin repeats); the interaction is direct. RFX forms cooperative DNA binding complexes with X2BP and CBF/NF-Y. RFX associates with CIITA to form an active transcriptional complex. In terms of processing, phosphorylated.

It is found in the nucleus. Functionally, activates transcription from class II MHC promoters. Recognizes X-boxes. Mediates cooperative binding between RFX and NF-Y. RFX binds the X1 box of MHC-II promoters. The sequence is that of DNA-binding protein Rfx5 (Rfx5) from Mus musculus (Mouse).